The following is an 821-amino-acid chain: Pentatricopeptide repeat-containing protein At4g04790, mitochondrial (821 aa).

The transit peptide at 1 to 74 directs the protein to the mitochondrion; sequence MVVSKVNKSL…KLLHVTTSDK (74 aa). 7 PPR repeats span residues 372-406, 407-441, 442-476, 477-511, 512-542, 544-574, and 578-612; these read SSTS…GLMI, SADI…SVKP, NTEN…NLEP, NSSM…GVKP, DSIT…AGVQ, TKRI…PDVP, and QNEL…ECHV. The interval 801–821 is disordered; sequence AFSQAPNKKKPKKKMIVLSTK.

It belongs to the PPR family. P subfamily.

The protein localises to the mitochondrion. This chain is Pentatricopeptide repeat-containing protein At4g04790, mitochondrial, found in Arabidopsis thaliana (Mouse-ear cress).